The following is a 252-amino-acid chain: uncharacterized protein (252 aa).

9–33 (LITGGSAGIGLELAKRLLELGNEVI) is a binding site for NADP(+). Residue Ser-139 coordinates substrate. The active-site Proton acceptor is Tyr-152.

Belongs to the short-chain dehydrogenases/reductases (SDR) family.

The protein localises to the cytoplasm. This is an uncharacterized protein from Bacillus subtilis (strain 168).